The following is a 770-amino-acid chain: Shutoff protein (770 aa).

2 disordered regions span residues 1-20 (MEEDLKLQPDSETLTTPNSE) and 30-49 (EEENEQVEQDPGYVTPPEDG). The segment covering 10–19 (DSETLTTPNS) has biased composition (polar residues). Positions 248–312 (VMDQVLIKRA…AVLVTVELEC (65 aa)) are binding to host EIF4G. Residues 315 to 433 (RFFANPQTLR…ELWTSFDERT (119 aa)) enclose the RRM domain. A phosphotyrosine; by host mark is found at Y332 and Y647. The disordered stretch occupies residues 661 to 770 (LSAAASCRSQ…TATMFTESQP (110 aa)). The span at 726–739 (GGPRGRGGRNHRQR) shows a compositional bias: basic residues. Over residues 742–755 (TIFQKTRSEPTSEN) the composition is skewed to polar residues.

This sequence belongs to the adenoviridae shutoff protein family. As to quaternary structure, monomer. Interacts with hexon protein; this interaction allows chaperoning and trimerization of hexon proteins. Interacts (via N-terminus) with host initiation factor EIF4G (via C-terminus). Interacts (via RRM domain) with viral mRNAs that contain the tripartite leader; this interaction allows ribosome shunting and expression of viral late mRNAs. In terms of processing, might be cleaved by the viral protease. Phosphorylated. Tyrosine phosphorylation enhances preferential binding to tripartite leader mRNAs and allows ribosome shunting. Post-translationally, methylated. Asymmetric dimethylation by host PRMT1 of the Arg/Gly-rich region may regulate shutoff protein binding to hexon and promote the capsid assembly in the nucleus.

The protein resides in the host cytoplasm. In terms of biological role, protein that inhibits host translation while promoting late viral translation by ribosome shunting. Blocks host cap-dependent translation by binding to eIF4G, displacing MKNK1 from cap initiation complexes and preventing EIF4E phosphorylation. Binds to the tripartite leader sequence of viral late mRNAs and recruits host eIF4G, PABPC1/poly-A binding protein and 40S ribosomes subunits on viral mRNAs, allowing ribosome shunting and efficient translation of late viral mRNAs even though conventional translation via ribosome scanning from the cap has been shut off in the host cell. During assembly, acts as a chaperone protein that helps hexon proteins assembly into trimers. The protein is Shutoff protein of Human adenovirus F serotype 40 (HAdV-40).